The sequence spans 368 residues: Probable magnesium transporter (368 aa).

The Extracellular portion of the chain corresponds to 1 to 4 (MEDK). A helical transmembrane segment spans residues 5–25 (YIGLALAMSSSLAIGTSFIIT). The Cytoplasmic segment spans residues 26-50 (KKGLMDASARTGGTDGVQASDYLQN). Residues 51–71 (PIWWGGMITMAIGEIANFAAY) traverse the membrane as a helical segment. Topologically, residues 72–76 (TFAPA) are extracellular. The chain crosses the membrane as a helical span at residues 77-97 (ILVTPLGALSVIIGAVLAAIF). Over 98 to 101 (LKER) the chain is Cytoplasmic. A helical transmembrane segment spans residues 102-122 (LGTLGKMGCAICLMGSVIIIL). At 123-143 (HAPPDKEVQTVDEILGYATQP) the chain is on the extracellular side. A helical transmembrane segment spans residues 144 to 164 (GFMFYCTVVTLYSLFMIYKIV). The Cytoplasmic portion of the chain corresponds to 165 to 175 (PKYGNTNPMIY). The helical transmembrane segment at 176–196 (LSICSSVGSISVMSIKAFGIA) threads the bilayer. Residues 197-206 (LKLTLGGNNQ) lie on the Extracellular side of the membrane. The helical transmembrane segment at 207-227 (FTHVSTYLFLIVVALCIVTQM) threads the bilayer. At 228–240 (NYFNKALDQFDTS) the chain is on the cytoplasmic side. The helical transmembrane segment at 241–261 (IVNPLYYVTFTTFTLAASFIL) threads the bilayer. Residues 262–269 (FKGFNTSS) lie on the Extracellular side of the membrane. The N-linked (GlcNAc...) asparagine glycan is linked to N266. A helical transmembrane segment spans residues 270-290 (AVDIISLLIGFLIIFSGVYLL). Residues 291–368 (NISRSESPMV…GDEDTRNYRH (78 aa)) lie on the Cytoplasmic side of the membrane.

The protein belongs to the NIPA family.

It is found in the cell membrane. Its subcellular location is the early endosome. It catalyses the reaction Mg(2+)(in) = Mg(2+)(out). In terms of biological role, probably acts as a selective Mg(2+) transporter. Plays a role in cell wall integrity and in engulfment by host macrophages. In Candida albicans (strain SC5314 / ATCC MYA-2876) (Yeast), this protein is Probable magnesium transporter.